The primary structure comprises 206 residues: MSAIKEVKSELRQFMKTLLGKISKEETQRQTEAVFEKIIESKWFQESKRLSVYVSTSGEIQTDSIIQKALEMGKEVFIPQFTKGSTAMDMVRVPDQTAFDNLPSTLWGIRQPEPKWKWQSYHETGPLDLILAPGVAFSPYGLRCGHGKGYYDRFFSTHHKHFPENSPKKIGLALREQIIGTIPISETDVELDEVIYEGETIIFDTI.

Residues 8–12 (KSELR) and Arg-12 each bind ATP. Substrate-binding positions include Val-54, Glu-59, and 146–150 (HGKGY). Residue 143 to 151 (RCGHGKGYY) coordinates ATP. 2 residues coordinate Mg(2+): Asp-152 and Asp-188.

The protein belongs to the 5-formyltetrahydrofolate cyclo-ligase family. Monomer. Mg(2+) serves as cofactor.

It is found in the cytoplasm. The enzyme catalyses (6S)-5-formyl-5,6,7,8-tetrahydrofolate + ATP = (6R)-5,10-methenyltetrahydrofolate + ADP + phosphate. In terms of biological role, contributes to tetrahydrofolate metabolism. Helps regulate carbon flow through the folate-dependent one-carbon metabolic network that supplies carbon for the biosynthesis of purines, thymidine and amino acids. Catalyzes the irreversible conversion of 5-formyltetrahydrofolate (5-CHO-H(4)PteGlu) to yield 5,10-methenyltetrahydrofolate. In Caenorhabditis elegans, this protein is Probable 5-formyltetrahydrofolate cyclo-ligase.